The primary structure comprises 119 residues: Basic phospholipase A2 taipoxin alpha chain (119 aa).

7 disulfide bridges follow: Cys11-Cys72, Cys27-Cys118, Cys29-Cys45, Cys44-Cys99, Cys51-Cys92, Cys61-Cys85, and Cys79-Cys90. Tyr28, Gly30, and Gly32 together coordinate Ca(2+). Residue His48 is part of the active site. Residue Asp49 participates in Ca(2+) binding. Residue Asp93 is part of the active site.

The protein belongs to the phospholipase A2 family. Group I subfamily. D49 sub-subfamily. In terms of assembly, heterotrimer of alpha, beta, and gamma chains; non-covalently linked. Ca(2+) serves as cofactor. Expressed by the venom gland.

It is found in the secreted. It catalyses the reaction a 1,2-diacyl-sn-glycero-3-phosphocholine + H2O = a 1-acyl-sn-glycero-3-phosphocholine + a fatty acid + H(+). Functionally, heterotrimer: Snake venom phospholipase A2 (PLA2) heterotrimer that acts as a potent presynaptic neurotoxin by blocking synaptic transmission and synaptic vesicle recycling. May act by binding in a calcium-dependent fashion to neurotonal pentraxin-1 (NPTX1) and neurotonal pentraxin-2 (NPTX2), but not to neuronal pentraxin receptor (NPTXR). Also binds to taipoxin-associated calcium binding protein 49 (RCN2), a protein localized in the lumen of endoplasmic reticulum. Its function is as follows. Monomer (alpha chain): Snake venom phospholipase A2 (PLA2) alpha chain that possesses the same high enzymatic activity as the heterotrimer. PLA2 catalyzes the calcium-dependent hydrolysis of the 2-acyl groups in 3-sn-phosphoglycerides. This is Basic phospholipase A2 taipoxin alpha chain from Oxyuranus scutellatus scutellatus (Australian taipan).